The chain runs to 558 residues: Putative transposase for insertion sequence IS1162 (558 aa).

Residues 11 to 93 (IKECLRLKFE…PDLITIHREL (83 aa)) enclose the HTH IS408-type domain. A DNA-binding region (H-T-H motif) is located at residues 23-44 (LSHEKIARALQLSKGVVSKYVT). The region spanning 139–336 (QQHRAGEKLF…HPYEVVTFKR (198 aa)) is the Integrase catalytic domain. The segment at 486-558 (QGLDQQPLPK…AAGQPQPELR (73 aa)) is disordered.

This sequence belongs to the transposase IS21/IS408/IS1162 family.

Required for the transposition of the insertion element. This chain is Putative transposase for insertion sequence IS1162, found in Pseudomonas fluorescens.